The sequence spans 156 residues: Arginine repressor (156 aa).

It belongs to the ArgR family.

It localises to the cytoplasm. It functions in the pathway amino-acid biosynthesis; L-arginine biosynthesis [regulation]. Regulates arginine biosynthesis genes. This chain is Arginine repressor, found in Proteus mirabilis (strain HI4320).